The primary structure comprises 609 residues: Glutamine--fructose-6-phosphate aminotransferase [isomerizing] (609 aa).

C2 (nucleophile; for GATase activity) is an active-site residue. Residues 2 to 218 (CGIVGAIAQR…EGDIAEITRR (217 aa)) enclose the Glutamine amidotransferase type-2 domain. SIS domains lie at 286-426 (ADEL…LKGL) and 458-599 (LAED…VDQP). K604 (for Fru-6P isomerization activity) is an active-site residue.

As to quaternary structure, homodimer.

It is found in the cytoplasm. It carries out the reaction D-fructose 6-phosphate + L-glutamine = D-glucosamine 6-phosphate + L-glutamate. Catalyzes the first step in hexosamine metabolism, converting fructose-6P into glucosamine-6P using glutamine as a nitrogen source. The chain is Glutamine--fructose-6-phosphate aminotransferase [isomerizing] from Escherichia coli O6:H1 (strain CFT073 / ATCC 700928 / UPEC).